We begin with the raw amino-acid sequence, 428 residues long: GTPase Obg (428 aa).

One can recognise an Obg domain in the interval 1 to 158; it reads MFVDQVKIYV…RDVILELKVL (158 aa). One can recognise an OBG-type G domain in the interval 159-329; that stretch reads ADVGLVGFPS…LLFEVANLIE (171 aa). Residues 165–172, 190–194, 212–215, 282–285, and 310–312 each bind GTP; these read GFPSVGKS, FTTIV, DLPG, NKMD, and SAV. Positions 172 and 192 each coordinate Mg(2+). The OCT domain maps to 350–428; sequence KFDTEGVKFE…ILEYEFEFID (79 aa).

This sequence belongs to the TRAFAC class OBG-HflX-like GTPase superfamily. OBG GTPase family. In terms of assembly, monomer. Requires Mg(2+) as cofactor.

The protein resides in the cytoplasm. Its function is as follows. An essential GTPase which binds GTP, GDP and possibly (p)ppGpp with moderate affinity, with high nucleotide exchange rates and a fairly low GTP hydrolysis rate. Plays a role in control of the cell cycle, stress response, ribosome biogenesis and in those bacteria that undergo differentiation, in morphogenesis control. This Bacillus cereus (strain B4264) protein is GTPase Obg.